Here is a 408-residue protein sequence, read N- to C-terminus: uncharacterized protein (408 aa).

Disordered stretches follow at residues Glu-218 to Arg-265 and Met-367 to Asn-408. Over residues Ser-369 to Ser-379 the composition is skewed to low complexity. The span at Ile-394–Asn-408 shows a compositional bias: acidic residues.

To C.elegans C05E11.1.

This is an uncharacterized protein from Arabidopsis thaliana (Mouse-ear cress).